Consider the following 452-residue polypeptide: Tubulin alpha-1D chain (452 aa).

The short motif at 1 to 4 is the MREC motif element; it reads MREC. A GTP-binding site is contributed by Gln-11. Position 40 is an N6-acetyllysine (Lys-40). GTP contacts are provided by Glu-71, Ser-140, Gly-144, Thr-145, Thr-179, Asn-206, and Asn-228. Glu-71 contributes to the Mg(2+) binding site. Glu-254 is an active-site residue. Tyr-282 carries the 3'-nitrotyrosine modification. Positions 432 to 452 are disordered; sequence YEEVGMDSVEGEGEEEEGDEY. The residue at position 439 (Ser-439) is a Phosphoserine. Residue Glu-446 is modified to 5-glutamyl polyglutamate. Position 452 is a 3'-nitrotyrosine (Tyr-452).

It belongs to the tubulin family. As to quaternary structure, dimer of alpha and beta chains. A typical microtubule is a hollow water-filled tube with an outer diameter of 25 nm and an inner diameter of 15 nM. Alpha-beta heterodimers associate head-to-tail to form protofilaments running lengthwise along the microtubule wall with the beta-tubulin subunit facing the microtubule plus end conferring a structural polarity. Microtubules usually have 13 protofilaments but different protofilament numbers can be found in some organisms and specialized cells. Mg(2+) is required as a cofactor. In terms of processing, some glutamate residues at the C-terminus are polyglycylated, resulting in polyglycine chains on the gamma-carboxyl group. Glycylation is mainly limited to tubulin incorporated into axonemes (cilia and flagella) whereas glutamylation is prevalent in neuronal cells, centrioles, axonemes, and the mitotic spindle. Both modifications can coexist on the same protein on adjacent residues, and lowering polyglycylation levels increases polyglutamylation, and reciprocally. Cilia and flagella glycylation is required for their stability and maintenance. Flagella glycylation controls sperm motility. Some glutamate residues at the C-terminus are polyglutamylated, resulting in polyglutamate chains on the gamma-carboxyl group. Polyglutamylation plays a key role in microtubule severing by spastin (SPAST). SPAST preferentially recognizes and acts on microtubules decorated with short polyglutamate tails: severing activity by SPAST increases as the number of glutamates per tubulin rises from one to eight, but decreases beyond this glutamylation threshold. Glutamylation is also involved in cilia motility. Post-translationally, acetylation of alpha chains at Lys-40 is located inside the microtubule lumen. This modification has been correlated with increased microtubule stability, intracellular transport and ciliary assembly. In terms of processing, methylation of alpha chains at Lys-40 is found in mitotic microtubules and is required for normal mitosis and cytokinesis contributing to genomic stability. Nitration of Tyr-452 is irreversible and interferes with normal dynein intracellular distribution. Post-translationally, undergoes a tyrosination/detyrosination cycle, the cyclic removal and re-addition of a C-terminal tyrosine residue by the enzymes tubulin tyrosine carboxypeptidase (MATCAP, VASH1 or VASH2) and tubulin tyrosine ligase (TTL), respectively. In terms of processing, tyrosination promotes microtubule interaction with CAP-Gly domain-containing proteins such as CLIP1, CLIP2 and DCTN1. Tyrosination regulates the initiation of dynein-dynactin motility via interaction with DCTN1, which brings the dynein-dynactin complex into contact with microtubules. In neurons, tyrosinated tubulins mediate the initiation of retrograde vesicle transport. Detyrosination is involved in metaphase plate congression by guiding chromosomes during mitosis: detyrosination promotes interaction with CENPE, promoting pole-proximal transport of chromosomes toward the equator. Detyrosination increases microtubules-dependent mechanotransduction in dystrophic cardiac and skeletal muscle. In cardiomyocytes, detyrosinated microtubules are required to resist to contractile compression during contraction: detyrosination promotes association with desmin (DES) at force-generating sarcomeres, leading to buckled microtubules and mechanical resistance to contraction.

The protein resides in the cytoplasm. Its subcellular location is the cytoskeleton. It catalyses the reaction GTP + H2O = GDP + phosphate + H(+). Tubulin is the major constituent of microtubules, a cylinder consisting of laterally associated linear protofilaments composed of alpha- and beta-tubulin heterodimers. Microtubules grow by the addition of GTP-tubulin dimers to the microtubule end, where a stabilizing cap forms. Below the cap, tubulin dimers are in GDP-bound state, owing to GTPase activity of alpha-tubulin. The chain is Tubulin alpha-1D chain (TUBA1D) from Bos taurus (Bovine).